The following is a 119-amino-acid chain: Phosphoribosyl-AMP cyclohydrolase (119 aa).

Aspartate 77 is a binding site for Mg(2+). Cysteine 78 provides a ligand contact to Zn(2+). Residues aspartate 79 and aspartate 81 each contribute to the Mg(2+) site. Positions 94 and 101 each coordinate Zn(2+).

This sequence belongs to the PRA-CH family. In terms of assembly, homodimer. It depends on Mg(2+) as a cofactor. The cofactor is Zn(2+).

The protein localises to the cytoplasm. It carries out the reaction 1-(5-phospho-beta-D-ribosyl)-5'-AMP + H2O = 1-(5-phospho-beta-D-ribosyl)-5-[(5-phospho-beta-D-ribosylamino)methylideneamino]imidazole-4-carboxamide. It participates in amino-acid biosynthesis; L-histidine biosynthesis; L-histidine from 5-phospho-alpha-D-ribose 1-diphosphate: step 3/9. In terms of biological role, catalyzes the hydrolysis of the adenine ring of phosphoribosyl-AMP. The polypeptide is Phosphoribosyl-AMP cyclohydrolase (Cereibacter sphaeroides (strain ATCC 17029 / ATH 2.4.9) (Rhodobacter sphaeroides)).